Consider the following 352-residue polypeptide: Protein RecA (352 aa).

67–74 is a binding site for ATP; it reads GPESSGKT.

This sequence belongs to the RecA family.

Its subcellular location is the cytoplasm. Can catalyze the hydrolysis of ATP in the presence of single-stranded DNA, the ATP-dependent uptake of single-stranded DNA by duplex DNA, and the ATP-dependent hybridization of homologous single-stranded DNAs. It interacts with LexA causing its activation and leading to its autocatalytic cleavage. This Chlamydia trachomatis serovar L2 (strain ATCC VR-902B / DSM 19102 / 434/Bu) protein is Protein RecA.